Consider the following 473-residue polypeptide: Photosystem II CP43 reaction center protein (473 aa).

A propeptide spanning residues 1 to 14 (MKTLYSLRRFSHVE) is cleaved from the precursor. Threonine 15 carries the N-acetylthreonine modification. At threonine 15 the chain carries Phosphothreonine. A run of 5 helical transmembrane segments spans residues 69–93 (LFEVAHFGPEKPMYEQGLILLPHLA), 134–155 (LLGPEIIEESFPLFRYVWKDRN), 178–200 (KALYFGGVYDTWAPGGGDVRKIT), 255–275 (KPFAWARRALVWSGEAYLSYS), and 291–312 (WFNNTAYPSEFYGPTGPEASQA). A [CaMn4O5] cluster-binding site is contributed by glutamate 367. The helical transmembrane segment at 447–471 (RARAAAAGFEKGIDRDFEPVLSMTP) threads the bilayer.

The protein belongs to the PsbB/PsbC family. PsbC subfamily. In terms of assembly, PSII is composed of 1 copy each of membrane proteins PsbA, PsbB, PsbC, PsbD, PsbE, PsbF, PsbH, PsbI, PsbJ, PsbK, PsbL, PsbM, PsbT, PsbX, PsbY, PsbZ, Psb30/Ycf12, at least 3 peripheral proteins of the oxygen-evolving complex and a large number of cofactors. It forms dimeric complexes. The cofactor is Binds multiple chlorophylls and provides some of the ligands for the Ca-4Mn-5O cluster of the oxygen-evolving complex. It may also provide a ligand for a Cl- that is required for oxygen evolution. PSII binds additional chlorophylls, carotenoids and specific lipids..

The protein localises to the plastid membrane. One of the components of the core complex of photosystem II (PSII). It binds chlorophyll and helps catalyze the primary light-induced photochemical processes of PSII. PSII is a light-driven water:plastoquinone oxidoreductase, using light energy to abstract electrons from H(2)O, generating O(2) and a proton gradient subsequently used for ATP formation. The chain is Photosystem II CP43 reaction center protein from Cuscuta gronovii (Common dodder).